Consider the following 134-residue polypeptide: Large ribosomal subunit protein eL32 (134 aa).

Belongs to the eukaryotic ribosomal protein eL32 family.

The protein is Large ribosomal subunit protein eL32 (RpL32) of Drosophila melanogaster (Fruit fly).